The following is a 520-amino-acid chain: GMP synthase [glutamine-hydrolyzing] (520 aa).

The 194-residue stretch at 9 to 202 (RVLIVDFGSQ…LFNIAGLKGD (194 aa)) folds into the Glutamine amidotransferase type-1 domain. Cys86 serves as the catalytic Nucleophile. Residues His176 and Glu178 contribute to the active site. Positions 203–395 (WTMAAFRQEM…LGLAPAFVGR (193 aa)) constitute a GMPS ATP-PPase domain. 230-236 (SGGVDSS) contacts ATP.

Homodimer.

It catalyses the reaction XMP + L-glutamine + ATP + H2O = GMP + L-glutamate + AMP + diphosphate + 2 H(+). It participates in purine metabolism; GMP biosynthesis; GMP from XMP (L-Gln route): step 1/1. Catalyzes the synthesis of GMP from XMP. The sequence is that of GMP synthase [glutamine-hydrolyzing] from Caulobacter vibrioides (strain ATCC 19089 / CIP 103742 / CB 15) (Caulobacter crescentus).